A 363-amino-acid chain; its full sequence is Bonnadiene synthase (363 aa).

Positions 93, 98, 234, 238, and 242 each coordinate Mg(2+).

It belongs to the terpene synthase family. The cofactor is Mg(2+).

It carries out the reaction (2E,6E,10E)-geranylgeranyl diphosphate = bonnadiene + diphosphate. Its pathway is secondary metabolite biosynthesis; terpenoid biosynthesis. Functionally, diterpene synthase that catalyzes the conversion of geranylgeranyl diphosphate (GGPP) to bonnadiene. Cannot use geranyl diphosphate (GPP), farnesyl diphosphate (FPP) and geranylfarnesyl diphosphate (GFPP). In Allokutzneria albata (Kibdelosporangium albatum), this protein is Bonnadiene synthase.